The sequence spans 366 residues: S-adenosylmethionine:tRNA ribosyltransferase-isomerase (366 aa).

This sequence belongs to the QueA family. In terms of assembly, monomer.

The protein resides in the cytoplasm. The enzyme catalyses 7-aminomethyl-7-carbaguanosine(34) in tRNA + S-adenosyl-L-methionine = epoxyqueuosine(34) in tRNA + adenine + L-methionine + 2 H(+). Its pathway is tRNA modification; tRNA-queuosine biosynthesis. In terms of biological role, transfers and isomerizes the ribose moiety from AdoMet to the 7-aminomethyl group of 7-deazaguanine (preQ1-tRNA) to give epoxyqueuosine (oQ-tRNA). This chain is S-adenosylmethionine:tRNA ribosyltransferase-isomerase, found in Agrobacterium fabrum (strain C58 / ATCC 33970) (Agrobacterium tumefaciens (strain C58)).